A 156-amino-acid polypeptide reads, in one-letter code: Small ribosomal subunit protein bS6 (156 aa).

The interval 95–156 (AITETSPLAK…DRDEQSEDSE (62 aa)) is disordered. The span at 117-126 (RSGRDRDESG) shows a compositional bias: basic and acidic residues.

Belongs to the bacterial ribosomal protein bS6 family.

Binds together with bS18 to 16S ribosomal RNA. The chain is Small ribosomal subunit protein bS6 from Nitrosococcus oceani (strain ATCC 19707 / BCRC 17464 / JCM 30415 / NCIMB 11848 / C-107).